We begin with the raw amino-acid sequence, 88 residues long: Large ribosomal subunit protein eL31 (88 aa).

This sequence belongs to the eukaryotic ribosomal protein eL31 family.

The sequence is that of Large ribosomal subunit protein eL31 from Methanoregula boonei (strain DSM 21154 / JCM 14090 / 6A8).